The sequence spans 396 residues: Probable sugar efflux transporter (396 aa).

12 consecutive transmembrane segments (helical) span residues 15–35 (VVTLAIAAFIFNTTEFVPVGL), 50–70 (VGIMLTIYAWVVAVMSLPFML), 81–101 (LICLFVLFIASHVLSFLAWNF), 103–123 (VLVISRIGIAFAHAIFWSITA), 136–156 (AQALSLIATGTALAMVLGLPI), 169–189 (TFFAIGMGALITLLCLIKLLP), 209–229 (PALMSLYVLTVVVVTAHYTAY), 246–266 (FATVLLLILGGAGIIGSLVFG), 275–295 (SLVSIAIALLVVCLLLLLPAA), 301–321 (LAILSIFWGIAIMVIGLGMQV), 333–353 (VAMALFSGIFNIGIGAGALVG), and 364–384 (AIGYIGDIPACAALVWAVLIF).

The protein belongs to the major facilitator superfamily. SotB (TC 2.A.1.2) family.

Its subcellular location is the cell inner membrane. Functionally, involved in the efflux of sugars. The physiological role may be the reduction of the intracellular concentration of toxic sugars or sugar metabolites. This Salmonella paratyphi C (strain RKS4594) protein is Probable sugar efflux transporter.